The following is a 71-amino-acid chain: UPF0346 protein SMU_1621c (71 aa).

Belongs to the UPF0346 family.

In Streptococcus mutans serotype c (strain ATCC 700610 / UA159), this protein is UPF0346 protein SMU_1621c.